The following is a 369-amino-acid chain: Cytochrome b561 and DOMON domain-containing protein At3g07570 (369 aa).

The first 22 residues, 1–22 (MKLYSVSIIIFVLIALSTIVNA), serve as a signal peptide directing secretion. One can recognise a DOMON domain in the interval 55-167 (QNFILRYART…PRQSLLYAVG (113 aa)). The 196-residue stretch at 174-369 (SSPDFRLREH…GLEVRKFLKK (196 aa)) folds into the Cytochrome b561 domain. A helical membrane pass occupies residues 212-232 (THGLMNMFGWGILIIVGAIVA). Residues histidine 213 and histidine 246 each coordinate heme b. Transmembrane regions (helical) follow at residues 247–267 (IALQ…GLVL) and 279–299 (HKGL…ALLA). Residues histidine 279 and histidine 315 each coordinate heme b. A run of 2 helical transmembrane segments spans residues 321 to 341 (LLII…KAGT) and 343 to 363 (WNGG…GLEV).

Heme b serves as cofactor.

The protein localises to the membrane. In terms of biological role, may act as a catecholamine-responsive trans-membrane electron transporter. The sequence is that of Cytochrome b561 and DOMON domain-containing protein At3g07570 from Arabidopsis thaliana (Mouse-ear cress).